The primary structure comprises 474 residues: ATP synthase subunit beta (474 aa).

158 to 165 serves as a coordination point for ATP; that stretch reads GGAGVGKT.

The protein belongs to the ATPase alpha/beta chains family. In terms of assembly, F-type ATPases have 2 components, CF(1) - the catalytic core - and CF(0) - the membrane proton channel. CF(1) has five subunits: alpha(3), beta(3), gamma(1), delta(1), epsilon(1). CF(0) has three main subunits: a(1), b(2) and c(9-12). The alpha and beta chains form an alternating ring which encloses part of the gamma chain. CF(1) is attached to CF(0) by a central stalk formed by the gamma and epsilon chains, while a peripheral stalk is formed by the delta and b chains.

Its subcellular location is the cell membrane. It carries out the reaction ATP + H2O + 4 H(+)(in) = ADP + phosphate + 5 H(+)(out). Produces ATP from ADP in the presence of a proton gradient across the membrane. The catalytic sites are hosted primarily by the beta subunits. The chain is ATP synthase subunit beta from Tropheryma whipplei (strain Twist) (Whipple's bacillus).